Consider the following 294-residue polypeptide: Transcriptional regulatory protein RXT3 (294 aa).

N-acetylserine is present on Ser2.

It belongs to the RXT3 family. Component of the RPD3C(L) complex composed of at least ASH1, CTI6, DEP1, PHO23, RPD3, RXT2, RXT3, SAP30, SDS3, SIN3, UME1 and UME6.

The protein localises to the nucleus. Its function is as follows. Component of the RPD3C(L) histone deacetylase complex (HDAC) responsible for the deacetylation of lysine residues on the N-terminal part of the core histones (H2A, H2B, H3 and H4). Histone deacetylation gives a tag for epigenetic repression and plays an important role in transcriptional regulation, cell cycle progression and developmental events. The protein is Transcriptional regulatory protein RXT3 (RXT3) of Saccharomyces cerevisiae (strain ATCC 204508 / S288c) (Baker's yeast).